The chain runs to 198 residues: Regulation of enolase protein 1 (198 aa).

Its subcellular location is the cytoplasm. Functions in the galactose metabolic pathway via the GAL83 protein and that it may control the level of ENO1. This Saccharomyces cerevisiae (strain ATCC 204508 / S288c) (Baker's yeast) protein is Regulation of enolase protein 1 (REE1).